The chain runs to 189 residues: MAQERRGSREDRQNREERDSEFVDKLVAINRVAKVVKGGRRFGFAALVVVGDQKGRVGFGHGKAREVPEAIRKATEAAKRDLIFVPLRGGRTLHHDVNGRHGAGKVLLRSAKAGTGIIAGGPMRAVFETLGVHDVVAKSTGSSNPYNMVRATFDALKNQMHPKDIAAQRGMKYATLQARRVAAGAASEE.

The S5 DRBM domain occupies 22–85 (FVDKLVAINR…EAAKRDLIFV (64 aa)).

Belongs to the universal ribosomal protein uS5 family. Part of the 30S ribosomal subunit. Contacts proteins S4 and S8.

Its function is as follows. With S4 and S12 plays an important role in translational accuracy. Located at the back of the 30S subunit body where it stabilizes the conformation of the head with respect to the body. This chain is Small ribosomal subunit protein uS5, found in Sinorhizobium fredii (strain NBRC 101917 / NGR234).